A 1023-amino-acid chain; its full sequence is MAEKRPLGPLGPMMYGKLPRLEPDPGPGHSLPLSASSQDSCNYKGAYFSCPIGGTSKAGSERLASWTPYPSLYPTGVAGSPLRGDNLLTNCLLYRPPTEGSEKIQDSSELLPFGPQAHAYPGPPLAAPKPVYRNPLCYGLSTCLGDGGTKRSLDGDWTLVTGPLLPSADPPCPLATAPGKGQPLDGTFLRGLPSGGPGKDSSLPFSPCQAFLEKYRTIQSTGFLASKYTSPYPGDAKQAMSEGPSSPWTQLAQPLGPPCQDAVAAHYPLPPPPQALPCPPSCHPEKQGSYGSLLPLPPLGAHKGAAYQAGGLGSPYLRQQAPQAPYMPPLGIDSYSYSSAPLPAPSPGLKLEPPLAPRCPLDFVPQTLGFPYARDDLSLYGASPGLGGTPPSHSQNSVQPVPQPGAFQRACQPLPASQPCSEPVRPAEKPTPEAQEKMWLPSCRKEQLQPRPNERPGVPIVIRDSPVPRTSPALHPCAKERQSVPQKDARPPSSPPMPVIDNVFSLAPYRDYLDVQTPEPRAERDSAPATSKSQDKDCKGNLPAQDGASRSHCSLREEVALDLSVKKTMAEGVPVKVPSPEVHEKPAEAVDGPGIENTVSGLPGLKKMVTEIPEVTAEATPRTNFHSSVAFMFRKFKILRTAPVPAAIVSSPTTPAPVPAPAPAQPVPNPPSVPVGLQILTQPLPVACFNLALPSPPAIVASPAPASAPPPSPAPAPAPASGPAPSSAQVPTAAPVDSPEQHFTGLHTSLCDAISGSVAHSPPEKLREWLETTGPWGQAAWQDCQGVQGLLGKLLSQLQKFVCTQRCPFPHVVRAGAIFVPIHLVKERLFPKLPPASVDHVLQDHRVELRPTTLSEERALRERALHGCTSRMLKLLALRQLPDIYPDLLGLQWHDCVRRQLGGFDTEARTLSPSEPTVTRDEPESQALAGKLPAPKVKKPGRKPPTPGPEKAEAATGEGSRNPSPSSGASTSPPGPTLRARFRNLLENAWLNGVALPTWGHKASGADRSSPHPQLLGSQTHHL.

Positions M1–A35 are disordered. An N6-acetyllysine modification is found at K17. Residues S206 and S383 each carry the phosphoserine modification. 5 disordered regions span residues G381–D501, P518–S551, P703–H742, E907–A980, and K1002–L1023. A Phosphothreonine modification is found at T389. The segment covering P391–P400 has biased composition (polar residues). Basic and acidic residues-rich tracts occupy residues R425–E436, C443–E454, and C477–R490. Phosphoserine is present on residues S493 and S494. Positions A706–G722 are enriched in pro residues. Phosphoserine occurs at positions 912, 964, and 972. Residues P963–S972 show a composition bias toward low complexity.

This is an uncharacterized protein from Mus musculus (Mouse).